The following is a 344-amino-acid chain: Nicotinate-nucleotide--dimethylbenzimidazole phosphoribosyltransferase (344 aa).

Glutamate 310 (proton acceptor) is an active-site residue.

This sequence belongs to the CobT family.

It carries out the reaction 5,6-dimethylbenzimidazole + nicotinate beta-D-ribonucleotide = alpha-ribazole 5'-phosphate + nicotinate + H(+). It functions in the pathway nucleoside biosynthesis; alpha-ribazole biosynthesis; alpha-ribazole from 5,6-dimethylbenzimidazole: step 1/2. Functionally, catalyzes the synthesis of alpha-ribazole-5'-phosphate from nicotinate mononucleotide (NAMN) and 5,6-dimethylbenzimidazole (DMB). This is Nicotinate-nucleotide--dimethylbenzimidazole phosphoribosyltransferase from Shewanella amazonensis (strain ATCC BAA-1098 / SB2B).